A 21-amino-acid chain; its full sequence is Serine protease inhibitor 1 (21 aa).

In terms of domain architecture, Pacifastin spans Glu1–Asp21. The segment at Glu1–Asp21 is disordered.

This sequence belongs to the protease inhibitor I19 family. In terms of tissue distribution, expressed in hemolymph.

The protein localises to the secreted. Probable serine protease inhibitor. This Melanoplus sanguinipes (Migratory grasshopper) protein is Serine protease inhibitor 1.